The primary structure comprises 369 residues: Nuclear hormone receptor family member nhr-64 (369 aa).

Positions Glu67–Val142 form a DNA-binding region, nuclear receptor. NR C4-type zinc fingers lie at residues Gln70 to Lys90 and Pro106 to Arg130. Residues Pro120 to Asn352 form the NR LBD domain.

It belongs to the nuclear hormone receptor family.

The protein localises to the nucleus. In terms of biological role, orphan nuclear receptor. The protein is Nuclear hormone receptor family member nhr-64 (nhr-64) of Caenorhabditis elegans.